The chain runs to 355 residues: UDP-3-O-acylglucosamine N-acyltransferase (355 aa).

Catalysis depends on His258, which acts as the Proton acceptor.

This sequence belongs to the transferase hexapeptide repeat family. LpxD subfamily. In terms of assembly, homotrimer.

It catalyses the reaction a UDP-3-O-[(3R)-3-hydroxyacyl]-alpha-D-glucosamine + a (3R)-hydroxyacyl-[ACP] = a UDP-2-N,3-O-bis[(3R)-3-hydroxyacyl]-alpha-D-glucosamine + holo-[ACP] + H(+). The protein operates within bacterial outer membrane biogenesis; LPS lipid A biosynthesis. Its function is as follows. Catalyzes the N-acylation of UDP-3-O-acylglucosamine using 3-hydroxyacyl-ACP as the acyl donor. Is involved in the biosynthesis of lipid A, a phosphorylated glycolipid that anchors the lipopolysaccharide to the outer membrane of the cell. In Bradyrhizobium sp. (strain ORS 278), this protein is UDP-3-O-acylglucosamine N-acyltransferase.